We begin with the raw amino-acid sequence, 158 residues long: Class 10 plant pathogenesis-related protein 2B (158 aa).

Aspartate 8 contacts trans-zeatin. Ca(2+) is bound by residues proline 32, valine 35, and isoleucine 38. Trans-zeatin is bound by residues glutamate 60, histidine 69, tyrosine 81, and tyrosine 83. Residue tyrosine 83 participates in melatonin binding.

It belongs to the BetVI family.

The protein localises to the cytoplasm. It localises to the cytosol. Class II ribonuclease (RNase). Binds to several cytokinins including natural adenine-type (e.g. trans-zeatin and kinetin) and artificial urea-type (e.g. N,N'-diphenylurea and N-phenyl-N'-(2-chloro-4-pyridyl)urea) hormones. Interacts with melatonin. In Lupinus luteus (European yellow lupine), this protein is Class 10 plant pathogenesis-related protein 2B.